The primary structure comprises 115 residues: Ribonuclease P protein component (115 aa).

The protein belongs to the RnpA family. Consists of a catalytic RNA component (M1 or rnpB) and a protein subunit.

The catalysed reaction is Endonucleolytic cleavage of RNA, removing 5'-extranucleotides from tRNA precursor.. In terms of biological role, RNaseP catalyzes the removal of the 5'-leader sequence from pre-tRNA to produce the mature 5'-terminus. It can also cleave other RNA substrates such as 4.5S RNA. The protein component plays an auxiliary but essential role in vivo by binding to the 5'-leader sequence and broadening the substrate specificity of the ribozyme. The polypeptide is Ribonuclease P protein component (Staphylococcus aureus (strain Mu3 / ATCC 700698)).